The primary structure comprises 171 residues: uncharacterized protein (171 aa).

Residues 5–25 (FLLTIFALWVGGFGYYLYLIN) traverse the membrane as a helical segment.

The protein localises to the membrane. This is an uncharacterized protein from Rickettsia conorii (strain ATCC VR-613 / Malish 7).